A 447-amino-acid polypeptide reads, in one-letter code: Adenylosuccinate synthetase (447 aa).

GTP is bound by residues 35 to 41 and 63 to 65; these read GDEGKGK and GHT. Catalysis depends on aspartate 36, which acts as the Proton acceptor. Aspartate 36 and glycine 63 together coordinate Mg(2+). Residues 36 to 39, 61 to 64, threonine 153, arginine 167, asparagine 245, threonine 260, and arginine 324 each bind IMP; these read DEGK and NAGH. The Proton donor role is filled by histidine 64. 320–326 contacts substrate; the sequence is VTTKRKR. Residues arginine 326, 352–354, and 435–437 contribute to the GTP site; these read KLD and GVG.

Belongs to the adenylosuccinate synthetase family. In terms of assembly, homodimer. Mg(2+) serves as cofactor.

It is found in the cytoplasm. It carries out the reaction IMP + L-aspartate + GTP = N(6)-(1,2-dicarboxyethyl)-AMP + GDP + phosphate + 2 H(+). It participates in purine metabolism; AMP biosynthesis via de novo pathway; AMP from IMP: step 1/2. In terms of biological role, plays an important role in the de novo pathway and in the salvage pathway of purine nucleotide biosynthesis. Catalyzes the first committed step in the biosynthesis of AMP from IMP. In Drosophila sechellia (Fruit fly), this protein is Adenylosuccinate synthetase.